The sequence spans 399 residues: Tryptophan synthase beta chain (399 aa).

K92 bears the N6-(pyridoxal phosphate)lysine mark.

Belongs to the TrpB family. Tetramer of two alpha and two beta chains. The cofactor is pyridoxal 5'-phosphate.

The catalysed reaction is (1S,2R)-1-C-(indol-3-yl)glycerol 3-phosphate + L-serine = D-glyceraldehyde 3-phosphate + L-tryptophan + H2O. It participates in amino-acid biosynthesis; L-tryptophan biosynthesis; L-tryptophan from chorismate: step 5/5. Its function is as follows. The beta subunit is responsible for the synthesis of L-tryptophan from indole and L-serine. This chain is Tryptophan synthase beta chain, found in Thiobacillus denitrificans (strain ATCC 25259 / T1).